Consider the following 121-residue polypeptide: MLFTYNKNPQYDSILMYAASNGYDKIVKLILDKVGTSFKEHIHETILLWAFQNEHYETIQLLIDHGFNKLVISNLLTNKNQFDVSNKYLIYFMADEEYYYQVRENIRNDQRVSTIKNTYRI.

ANK repeat units follow at residues 10–40 and 42–71; these read QYDS…SFKE and IHET…NKLV.

The polypeptide is Putative ankyrin repeat protein L215 (Acanthamoeba polyphaga mimivirus (APMV)).